Reading from the N-terminus, the 130-residue chain is Small ribosomal subunit protein uS8 (130 aa).

Belongs to the universal ribosomal protein uS8 family. In terms of assembly, part of the 30S ribosomal subunit. Contacts proteins S5 and S12.

One of the primary rRNA binding proteins, it binds directly to 16S rRNA central domain where it helps coordinate assembly of the platform of the 30S subunit. The chain is Small ribosomal subunit protein uS8 from Shewanella sediminis (strain HAW-EB3).